Consider the following 253-residue polypeptide: MEALAVDGLPEIHEGDDLAALLEDRVDFADGDVLCVASTIVSKAEGRAFDRESFPPSDRAKAIADRLSTITGEQKDPRFAQAVLEESEELLTESPFLLSVTRFGHITVNAGIDRSNVPGADLLLLPEDPTASAERLSSALGVPVVVTDTSGRPFRYGQRGVAVGWAGLPAARDWRGETDRDGRELGVTVQAVVDELAATANLVAGEGDDGTPAVVVREWSFGDHDGSDLLFRREEDDIVREALRQWTFDGHQQ.

GTP-binding positions include 9-12 (LPEI), 38-39 (ST), and Lys-43. Asp-113 provides a ligand contact to a divalent metal cation. Asn-116 provides a ligand contact to GTP. Residues Asp-148, Thr-149, and Glu-206 each coordinate a divalent metal cation. Position 204-211 (204-211 (AGEGDDGT)) interacts with GTP.

Belongs to the CofE family. In terms of assembly, homodimer. It depends on Mg(2+) as a cofactor. The cofactor is Mn(2+). K(+) is required as a cofactor.

It carries out the reaction oxidized coenzyme F420-0 + GTP + L-glutamate = oxidized coenzyme F420-1 + GDP + phosphate + H(+). The enzyme catalyses oxidized coenzyme F420-1 + GTP + L-glutamate = oxidized coenzyme F420-2 + GDP + phosphate + H(+). It functions in the pathway cofactor biosynthesis; coenzyme F420 biosynthesis. Functionally, catalyzes the GTP-dependent successive addition of two or more gamma-linked L-glutamates to the L-lactyl phosphodiester of 7,8-didemethyl-8-hydroxy-5-deazariboflavin (F420-0) to form coenzyme F420-0-glutamyl-glutamate (F420-2) or polyglutamated F420 derivatives. This Natronomonas pharaonis (strain ATCC 35678 / DSM 2160 / CIP 103997 / JCM 8858 / NBRC 14720 / NCIMB 2260 / Gabara) (Halobacterium pharaonis) protein is Coenzyme F420:L-glutamate ligase.